A 314-amino-acid polypeptide reads, in one-letter code: Deacetoxycephalosporin C synthase (314 aa).

The region spanning 156 to 269 (DCEPLLRLRY…RTSSVFFLRP (114 aa)) is the Fe2OG dioxygenase domain.

It belongs to the iron/ascorbate-dependent oxidoreductase family. Requires Fe cation as cofactor. The cofactor is L-ascorbate.

It catalyses the reaction penicillin N + 2-oxoglutarate + O2 = deacetoxycephalosporin C + succinate + CO2 + H2O. It functions in the pathway antibiotic biosynthesis; cephalosporin C biosynthesis. In terms of biological role, catalyzes the step from penicillin N to deacetoxy-cephalosporin C. The sequence is that of Deacetoxycephalosporin C synthase (cefE) from Amycolatopsis lactamdurans (Nocardia lactamdurans).